Here is a 97-residue protein sequence, read N- to C-terminus: Co-chaperonin GroES (97 aa).

It belongs to the GroES chaperonin family. As to quaternary structure, heptamer of 7 subunits arranged in a ring. Interacts with the chaperonin GroEL.

The protein resides in the cytoplasm. Together with the chaperonin GroEL, plays an essential role in assisting protein folding. The GroEL-GroES system forms a nano-cage that allows encapsulation of the non-native substrate proteins and provides a physical environment optimized to promote and accelerate protein folding. GroES binds to the apical surface of the GroEL ring, thereby capping the opening of the GroEL channel. The chain is Co-chaperonin GroES from Pseudomonas putida (strain GB-1).